Reading from the N-terminus, the 119-residue chain is UPF0102 protein CGSHiGG_01960 (119 aa).

The protein belongs to the UPF0102 family.

This Haemophilus influenzae (strain PittGG) protein is UPF0102 protein CGSHiGG_01960.